Consider the following 319-residue polypeptide: Aliphatic sulfonates import ATP-binding protein SsuB 1 (319 aa).

One can recognise an ABC transporter domain in the interval 63–282 (VTLSGVSKRF…ARASAAFAAL (220 aa)). 95-102 (GRSGCGKS) lines the ATP pocket.

Belongs to the ABC transporter superfamily. Aliphatic sulfonates importer (TC 3.A.1.17.2) family. As to quaternary structure, the complex is composed of two ATP-binding proteins (SsuB), two transmembrane proteins (SsuC) and a solute-binding protein (SsuA).

The protein localises to the cell inner membrane. The catalysed reaction is ATP + H2O + aliphatic sulfonate-[sulfonate-binding protein]Side 1 = ADP + phosphate + aliphatic sulfonateSide 2 + [sulfonate-binding protein]Side 1.. Functionally, part of the ABC transporter complex SsuABC involved in aliphatic sulfonates import. Responsible for energy coupling to the transport system. This is Aliphatic sulfonates import ATP-binding protein SsuB 1 from Burkholderia lata (strain ATCC 17760 / DSM 23089 / LMG 22485 / NCIMB 9086 / R18194 / 383).